Here is a 326-residue protein sequence, read N- to C-terminus: Malate dehydrogenase (326 aa).

12 to 18 (GGTGQIA) is a binding site for NAD(+). 2 residues coordinate substrate: R93 and R99. NAD(+) is bound by residues N106, Q113, and 130–132 (VGN). Substrate-binding residues include N132 and R163. H188 serves as the catalytic Proton acceptor.

The protein belongs to the LDH/MDH superfamily. MDH type 2 family.

It catalyses the reaction (S)-malate + NAD(+) = oxaloacetate + NADH + H(+). Catalyzes the reversible oxidation of malate to oxaloacetate. In Chlamydia muridarum (strain MoPn / Nigg), this protein is Malate dehydrogenase.